The primary structure comprises 385 residues: 1-deoxy-D-xylulose 5-phosphate reductoisomerase (385 aa).

Residues T10, G11, S12, I13, N38, and N124 each coordinate NADPH. K125 contacts 1-deoxy-D-xylulose 5-phosphate. NADPH is bound at residue E126. Residue D150 participates in Mn(2+) binding. 1-deoxy-D-xylulose 5-phosphate-binding residues include S151, E152, S176, and H199. Mn(2+) is bound at residue E152. G205 contacts NADPH. The 1-deoxy-D-xylulose 5-phosphate site is built by S212, N217, K218, and E221. E221 contributes to the Mn(2+) binding site.

Belongs to the DXR family. Requires Mg(2+) as cofactor. It depends on Mn(2+) as a cofactor.

It carries out the reaction 2-C-methyl-D-erythritol 4-phosphate + NADP(+) = 1-deoxy-D-xylulose 5-phosphate + NADPH + H(+). It functions in the pathway isoprenoid biosynthesis; isopentenyl diphosphate biosynthesis via DXP pathway; isopentenyl diphosphate from 1-deoxy-D-xylulose 5-phosphate: step 1/6. Functionally, catalyzes the NADPH-dependent rearrangement and reduction of 1-deoxy-D-xylulose-5-phosphate (DXP) to 2-C-methyl-D-erythritol 4-phosphate (MEP). The polypeptide is 1-deoxy-D-xylulose 5-phosphate reductoisomerase (Clostridium acetobutylicum (strain ATCC 824 / DSM 792 / JCM 1419 / IAM 19013 / LMG 5710 / NBRC 13948 / NRRL B-527 / VKM B-1787 / 2291 / W)).